Here is a 242-residue protein sequence, read N- to C-terminus: MIILPAIDLKEGKCVRLYQGDFKASKVVAEDPIEVALKFKENGAEYIHIVDLDGALTGQIKNLSIISSIIKTINIPVELGGGIRNLNTIDMLIDAGIERVILGTAALNNRGLVEKAVKKYDKKIAIGIDAKNEKVAINGWLNISSTNYIDFAKEMEKIGIRNIIFTDISKDGTLKGPNLNQLKKLNESVSCNIIASGGIKDIEDLKVIKEMDIYGAIVGKAIYSGNIDLNEAIKIINKESSR.

Residue Asp-8 is the Proton acceptor of the active site. Asp-129 acts as the Proton donor in catalysis.

It belongs to the HisA/HisF family.

It localises to the cytoplasm. The catalysed reaction is 1-(5-phospho-beta-D-ribosyl)-5-[(5-phospho-beta-D-ribosylamino)methylideneamino]imidazole-4-carboxamide = 5-[(5-phospho-1-deoxy-D-ribulos-1-ylimino)methylamino]-1-(5-phospho-beta-D-ribosyl)imidazole-4-carboxamide. It functions in the pathway amino-acid biosynthesis; L-histidine biosynthesis; L-histidine from 5-phospho-alpha-D-ribose 1-diphosphate: step 4/9. This Clostridium botulinum (strain Okra / Type B1) protein is 1-(5-phosphoribosyl)-5-[(5-phosphoribosylamino)methylideneamino] imidazole-4-carboxamide isomerase.